We begin with the raw amino-acid sequence, 976 residues long: MVKSKVKKVEKGKEGEEKRSTYVLLKKVLIPILVFGFAIYAFYLRHLTAGKYFPDPDTFYHFEIYKLVLKEGLPRYYPMSDAPFGSLIGEPLGLYLLPAAFYKVVSLFGYNELQAFLLWPPFVGFLGVIAVYLLGRKVLNEWTGLWGAVVLTVSTANFSRTFSGNARGDGPFMALFIFASVAMLYYLKESNKTRKIIYGTLFVLLTVISLGAWNGSPFGLMVLLGFASLQTIILFIFGKLEELKKFVKEFYPAYLAILAFGYALTFPGIVKIGGFIRFAFEVFLGLIFLLVIMLYGGRYLNYSDKKHRFLVVTIIVLLGFGGAYAYVGPKLFRLMGGAYQSTQVYETVQELAKTTIGDVKAYYGVESGNGLIFFLSIPGLLILLTKYLYDLFKKAKSDNETLFALVFYTMSLYLLYLAVRFLFLASYAVALFFGIFIGFSMDVIEKMKENIGIKAALGIVLSLMILVIPFVHAPVLARSARALKNTEIEVTGWEQALKWLRSNTSKYATATSWWDYGYWIESSLLGNRRASADGGHARDRDHILALFLARDGNISEVDFESWELNYFIIYLNDWAKFNAISYLGGAITRKEYNGDENGRGRVTTILLTQAAGNVYVNPYARIVIKVIQQNKTRRIAVNIGQLECSPILSVAFPGNIKIKGSGRCSDGSPFPYVVYLTPSLGVLAYYKVATSNFVKLAFGIPTSSYSEFAEKLFSNFIPVYQYGSVIVYEFRPFAIYKIEDFINGTWREVGKLSPGKHTLRLYISAFGRDIKNATLYVYALNGTKIIKRIKVGEIKYMNHLEEYPIIVNVTLPTAQKYRFILAQKGPVGVLTGPVRVNGKITNPAYIMREGESGRLELKVGVDKEYTADLYLRATFIYLVRKGGKSNEDYDASFEPHMDTFFITKLKEGIKLRPGENEIVVNAEMPKNAISSYKEKLEKEHGDKLIIRGIRVEPVFIVEKEYTMIEVSASAPHHSSE.

Topologically, residues 1 to 21 (MVKSKVKKVEKGKEGEEKRST) are cytoplasmic. A helical membrane pass occupies residues 22–42 (YVLLKKVLIPILVFGFAIYAF). Residues 43–112 (YLRHLTAGKY…KVVSLFGYNE (70 aa)) are Extracellular-facing. Residues 55 to 57 (DPD) carry the DXD motif 1 motif. A Mn(2+)-binding site is contributed by Asp-57. Residues 113 to 133 (LQAFLLWPPFVGFLGVIAVYL) form a helical membrane-spanning segment. The Cytoplasmic portion of the chain corresponds to 134 to 135 (LG). The helical transmembrane segment at 136 to 156 (RKVLNEWTGLWGAVVLTVSTA) threads the bilayer. The Extracellular portion of the chain corresponds to 157–165 (NFSRTFSGN). A helical transmembrane segment spans residues 166 to 186 (ARGDGPFMALFIFASVAMLYY). 2 residues coordinate Mn(2+): Arg-167 and Asp-169. Residues 167 to 169 (RGD) carry the DXD motif 2 motif. The Cytoplasmic portion of the chain corresponds to 187 to 193 (LKESNKT). A helical transmembrane segment spans residues 194–214 (RKIIYGTLFVLLTVISLGAWN). Gly-215 is a topological domain (extracellular). A helical membrane pass occupies residues 216-236 (SPFGLMVLLGFASLQTIILFI). Topologically, residues 237–247 (FGKLEELKKFV) are cytoplasmic. A helical transmembrane segment spans residues 248–268 (KEFYPAYLAILAFGYALTFPG). Residue Ile-269 is a topological domain, extracellular. A helical membrane pass occupies residues 270 to 290 (VKIGGFIRFAFEVFLGLIFLL). The Cytoplasmic portion of the chain corresponds to 291–306 (VIMLYGGRYLNYSDKK). The helical transmembrane segment at 307–327 (HRFLVVTIIVLLGFGGAYAYV) threads the bilayer. Residues 328–360 (GPKLFRLMGGAYQSTQVYETVQELAKTTIGDVK) are Extracellular-facing. The short motif at 347 to 350 (TVQE) is the TIXE motif element. A helical transmembrane segment spans residues 361 to 381 (AYYGVESGNGLIFFLSIPGLL). The Cytoplasmic portion of the chain corresponds to 382–396 (ILLTKYLYDLFKKAK). The chain crosses the membrane as a helical span at residues 397–417 (SDNETLFALVFYTMSLYLLYL). Residue Ala-418 is a topological domain, extracellular. Residues 419–439 (VRFLFLASYAVALFFGIFIGF) form a helical membrane-spanning segment. Residue Arg-420 coordinates a glycophospholipid. The Cytoplasmic portion of the chain corresponds to 440–453 (SMDVIEKMKENIGI). The chain crosses the membrane as a helical span at residues 454–474 (KAALGIVLSLMILVIPFVHAP). The Extracellular segment spans residues 475-976 (VLARSARALK…SASAPHHSSE (502 aa)). Positions 513–515 (WWD) are interacts with target acceptor peptide in protein substrate. The WWDYG motif motif lies at 513–517 (WWDYG). Residue Tyr-518 coordinates a glycophospholipid. The DK motif motif lies at 573 to 580 (DWAKFNAI).

Belongs to the STT3 family. It depends on Mn(2+) as a cofactor. Mg(2+) is required as a cofactor.

It localises to the cell membrane. It carries out the reaction an archaeal dolichyl phosphooligosaccharide + [protein]-L-asparagine = an archaeal dolichyl phosphate + a glycoprotein with the oligosaccharide chain attached by N-beta-D-glycosyl linkage to a protein L-asparagine.. The protein operates within protein modification; protein glycosylation. Its function is as follows. Oligosaccharyl transferase (OST) that catalyzes the initial transfer of a defined glycan (ManNAcXyl(2)GlcAMan(2)GalNAc in Pyrococcus) from the lipid carrier dolichol-monophosphate to an asparagine residue within an Asn-X-Ser/Thr consensus motif in nascent polypeptide chains, the first step in protein N-glycosylation. This is Dolichyl-phosphooligosaccharide-protein glycotransferase 1 (aglB1) from Pyrococcus horikoshii (strain ATCC 700860 / DSM 12428 / JCM 9974 / NBRC 100139 / OT-3).